A 185-amino-acid polypeptide reads, in one-letter code: Threonylcarbamoyl-AMP synthase (185 aa).

The region spanning S4–G185 is the YrdC-like domain.

This sequence belongs to the SUA5 family. TsaC subfamily.

It is found in the cytoplasm. The enzyme catalyses L-threonine + hydrogencarbonate + ATP = L-threonylcarbamoyladenylate + diphosphate + H2O. Functionally, required for the formation of a threonylcarbamoyl group on adenosine at position 37 (t(6)A37) in tRNAs that read codons beginning with adenine. Catalyzes the conversion of L-threonine, HCO(3)(-)/CO(2) and ATP to give threonylcarbamoyl-AMP (TC-AMP) as the acyladenylate intermediate, with the release of diphosphate. This chain is Threonylcarbamoyl-AMP synthase, found in Pseudomonas syringae pv. tomato (strain ATCC BAA-871 / DC3000).